Consider the following 459-residue polypeptide: Putrescine aminotransferase (459 aa).

Pyridoxal 5'-phosphate is bound by residues 150–151 and glutamine 274; that span reads GT. N6-(pyridoxal phosphate)lysine is present on lysine 300. Threonine 332 contacts pyridoxal 5'-phosphate.

It belongs to the class-III pyridoxal-phosphate-dependent aminotransferase family. Putrescine aminotransferase subfamily. Pyridoxal 5'-phosphate is required as a cofactor.

It catalyses the reaction an alkane-alpha,omega-diamine + 2-oxoglutarate = an omega-aminoaldehyde + L-glutamate. It carries out the reaction putrescine + 2-oxoglutarate = 1-pyrroline + L-glutamate + H2O. The enzyme catalyses cadaverine + 2-oxoglutarate = 5-aminopentanal + L-glutamate. It participates in amine and polyamine degradation; putrescine degradation; 4-aminobutanal from putrescine (transaminase route): step 1/1. Catalyzes the aminotransferase reaction from putrescine to 2-oxoglutarate, leading to glutamate and 4-aminobutanal, which spontaneously cyclizes to form 1-pyrroline. This is the first step in one of two pathways for putrescine degradation, where putrescine is converted into 4-aminobutanoate (gamma-aminobutyrate or GABA) via 4-aminobutanal. Also functions as a cadaverine transaminase in a a L-lysine degradation pathway to succinate that proceeds via cadaverine, glutarate and L-2-hydroxyglutarate. The chain is Putrescine aminotransferase from Enterobacter sp. (strain 638).